Here is a 447-residue protein sequence, read N- to C-terminus: Probable aspartic protease At2g35615 (447 aa).

The signal sequence occupies residues 1–20 (MATQILLCFFLFFSVTLSSS). Asn-25 is a glycosylation site (N-linked (GlcNAc...) asparagine). In terms of domain architecture, Peptidase A1 spans 85–439 (FFMSITIGTP…DLETRTVSFQ (355 aa)). Asp-103 is a catalytic residue. An N-linked (GlcNAc...) asparagine glycan is attached at Asn-251. Asp-326 is an active-site residue.

This sequence belongs to the peptidase A1 family.

It localises to the secreted. The protein is Probable aspartic protease At2g35615 of Arabidopsis thaliana (Mouse-ear cress).